The chain runs to 256 residues: MNTPVIAAEGLSIRVDGRTVLADISVAVAAGEIVTIVGPNGSGKSTFLRALIGALPAASGRVIRAPGLRIGYVPQKLAIDATLPITVSRFLSLPRRVPQDVAAEALARAGVPDLANRQMTDLSGGQFQRVLLARAVLERPHLLLLDEATQGLDQPGSAAFYEQIEEVRQDLGCAVVMVSHDLHVVMAASDRVLCMNGHICCEGTPEVVADAPEYRALFGTGTRGALALYRHQHSHRHDDDCGHDHGAEHMHPHGDR.

Residues 6–221 (IAAEGLSIRV…PEYRALFGTG (216 aa)) enclose the ABC transporter domain. Residue 38 to 45 (GPNGSGKS) coordinates ATP. The interval 237–256 (HDDDCGHDHGAEHMHPHGDR) is disordered.

The protein belongs to the ABC transporter superfamily. Zinc importer (TC 3.A.1.15.5) family. The complex is composed of two ATP-binding proteins (ZnuC), two transmembrane proteins (ZnuB) and a solute-binding protein (ZnuA).

The protein localises to the cell inner membrane. The enzyme catalyses Zn(2+)(out) + ATP(in) + H2O(in) = Zn(2+)(in) + ADP(in) + phosphate(in) + H(+)(in). Its function is as follows. Part of the ABC transporter complex ZnuABC involved in zinc import. Responsible for energy coupling to the transport system. The polypeptide is Zinc import ATP-binding protein ZnuC (Ruegeria pomeroyi (strain ATCC 700808 / DSM 15171 / DSS-3) (Silicibacter pomeroyi)).